Consider the following 467-residue polypeptide: Glutamate--tRNA ligase (467 aa).

The short motif at 9–19 is the 'HIGH' region element; the sequence is PSPTGYLHIGG. A 'KMSKS' region motif is present at residues 237 to 241; the sequence is KLSKR. An ATP-binding site is contributed by K240.

Belongs to the class-I aminoacyl-tRNA synthetase family. Glutamate--tRNA ligase type 1 subfamily. As to quaternary structure, monomer.

Its subcellular location is the cytoplasm. The catalysed reaction is tRNA(Glu) + L-glutamate + ATP = L-glutamyl-tRNA(Glu) + AMP + diphosphate. Its function is as follows. Catalyzes the attachment of glutamate to tRNA(Glu) in a two-step reaction: glutamate is first activated by ATP to form Glu-AMP and then transferred to the acceptor end of tRNA(Glu). This chain is Glutamate--tRNA ligase, found in Xylella fastidiosa (strain M12).